A 314-amino-acid chain; its full sequence is 4-hydroxyproline 2-epimerase (314 aa).

The Proton acceptor role is filled by Cys88. Substrate-binding positions include 89-90 (GH), His208, and Asp232. The Proton donor role is filled by Cys236. 237-238 (GT) serves as a coordination point for substrate.

Belongs to the proline racemase family. As to quaternary structure, homodimer.

The enzyme catalyses trans-4-hydroxy-L-proline = cis-4-hydroxy-D-proline. Inhibited by iodoacetate, iodoacetamide and by high amounts (10 mM) of pyrrole-2-carboxylate (PYC). Not inhibited by PYC at 1 mM. Functionally, allows intracellular utilization of 4-hydroxyproline, one of the major constituents of host collagen, by converting trans-4-hydroxy-L-proline (t4LHyp) to cis-4-hydroxy-D-proline (c4DHyp), which can be further metabolized by intracellular 4-hydroxy-D-proline oxidases. Strong B-cell mitogen. Plays an important role in the regulation of intra- and extracellular amino acid pools, allowing the bacterium to profit from host precursors and enzymatic pathways. Cannot use L-proline, trans-3-hydroxy-L-proline (t3LHyp) and pyrrolidone-5-carboxylate (P5C) as substrate. This is 4-hydroxyproline 2-epimerase from Pseudomonas aeruginosa (strain ATCC 15692 / DSM 22644 / CIP 104116 / JCM 14847 / LMG 12228 / 1C / PRS 101 / PAO1).